A 252-amino-acid polypeptide reads, in one-letter code: Beta-crystallin B1 (252 aa).

Low complexity-rich tracts occupy residues methionine 1–valine 15 and lysine 24–threonine 37. The tract at residues methionine 1–threonine 42 is disordered. Residue serine 2 is modified to N-acetylserine. The interval serine 2–asparagine 58 is N-terminal arm. Beta/gamma crystallin 'Greek key' domains follow at residues tyrosine 59 to alanine 98 and glycine 99 to lysine 143. The connecting peptide stretch occupies residues methionine 144–glutamate 148. 2 Beta/gamma crystallin 'Greek key' domains span residues histidine 149 to serine 190 and glycine 191 to arginine 233. The segment at lysine 235–lysine 252 is C-terminal arm.

This sequence belongs to the beta/gamma-crystallin family. In terms of assembly, homo/heterodimer, or complexes of higher-order. The structure of beta-crystallin oligomers seems to be stabilized through interactions between the N-terminal arms. Specific cleavages in the N-terminal arm occur during lens maturation and give rise to truncated forms, leading to impaired oligomerization and protein insolubilization.

Its function is as follows. Crystallins are the dominant structural components of the vertebrate eye lens. The sequence is that of Beta-crystallin B1 (CRYBB1) from Homo sapiens (Human).